Here is a 506-residue protein sequence, read N- to C-terminus: AAA-ATPase At4g25835 (506 aa).

The signal sequence occupies residues 1-20; sequence MKEYWTSLASLLGVLAFCQS. Position 244–251 (244–251) interacts with ATP; that stretch reads GPPGTGKS. The segment at 462–506 is disordered; it reads GKSRVQNVSLEEQENRAFDSLYAEENGGEEEEIEDNICKSSDDCS. Over residues 487–496 the composition is skewed to acidic residues; that stretch reads NGGEEEEIED. A compositionally biased stretch (basic and acidic residues) spans 497–506; the sequence is NICKSSDDCS.

The protein belongs to the AAA ATPase family. BCS1 subfamily. The cofactor is Mg(2+).

It carries out the reaction ATP + H2O = ADP + phosphate + H(+). The sequence is that of AAA-ATPase At4g25835 from Arabidopsis thaliana (Mouse-ear cress).